The primary structure comprises 685 residues: Frizzled-8 (685 aa).

The N-terminal stretch at 1-27 is a signal peptide; sequence MEWGYLLEVTSLLAALAVLQRSSGAAA. At 28-272 the chain is on the extracellular side; it reads ASAKELACQE…NPFFSQDERA (245 aa). Positions 30-151 constitute an FZ domain; it reads AKELACQEIT…GNPDTLCMDY (122 aa). Disulfide bonds link C35-C96, C43-C89, C80-C118, C107-C148, and C111-C135. N-linked (GlcNAc...) asparagine glycosylation is present at N49. Position 71 to 78 (71 to 78) interacts with hexadecanoate; the sequence is QFWPLVEI. The wnt-binding stretch occupies residues 95 to 100; that stretch reads ICLEDY. Positions 147–152 are wnt-binding; that stretch reads LCMDYN. An N-linked (GlcNAc...) asparagine glycan is attached at N152. The disordered stretch occupies residues 155-223; that stretch reads DLTTAAPSPP…KARPPGGGAA (69 aa). The span at 161–176 shows a compositional bias: pro residues; the sequence is PSPPRRLPPPPPPGEQ. 2 stretches are compositionally biased toward low complexity: residues 177-187 and 200-223; these read PPSGSGHSRPP and GSGD…GGAA. The helical transmembrane segment at 273–293 threads the bilayer; sequence FTVFWIGLWSVLCFVSTFATV. The Cytoplasmic portion of the chain corresponds to 294–309; it reads STFLIDMERFKYPERP. Residues 310 to 330 form a helical membrane-spanning segment; that stretch reads IIFLSACYLFVSVGYLVRLVA. At 331–394 the chain is on the extracellular side; the sequence is GHEKVACSGG…RYETTGPALC (64 aa). The helical transmembrane segment at 395 to 415 threads the bilayer; that stretch reads TVVFLLVYFFGMASSIWWVIL. Residues 416-437 are Cytoplasmic-facing; sequence SLTWFLAAGMKWGNEAIAGYSQ. The chain crosses the membrane as a helical span at residues 438–458; the sequence is YFHLAAWLVPSVKSIAVLALS. Over 459-481 the chain is Extracellular; it reads SVDGDPVAGICYVGNQSLDNLRG. N-linked (GlcNAc...) asparagine glycosylation is present at N473. The chain crosses the membrane as a helical span at residues 482–502; the sequence is FVLAPLVIYLFIGTMFLLAGF. Over 503–530 the chain is Cytoplasmic; it reads VSLFRIRSVIKQQGGPTKTHKLEKLMIR. Residues 531-551 form a helical membrane-spanning segment; the sequence is LGLFTVLYTVPAAVVVACLFY. At 552–582 the chain is on the extracellular side; the sequence is EQHNRPRWEATHNCPCLRDLQPDQARRPDYA. The chain crosses the membrane as a helical span at residues 583 to 603; sequence VFMLKYFMCLVVGITSGVWVW. At 604–685 the chain is on the cytoplasmic side; that stretch reads SGKTLESWRA…YPKQMPLSQV (82 aa). The Lys-Thr-X-X-X-Trp motif, mediates interaction with the PDZ domain of Dvl family members signature appears at 606–611; that stretch reads KTLESW. The segment covering 631-655 has biased composition (gly residues); sequence AGGSGPGGSGPGPGGGGGHGGGGGS. The disordered stretch occupies residues 631–656; that stretch reads AGGSGPGGSGPGPGGGGGHGGGGGSL. Positions 683–685 match the PDZ-binding motif; that stretch reads SQV.

Belongs to the G-protein coupled receptor Fz/Smo family. In terms of assembly, component of a Wnt-signaling complex that contains a WNT protein, a FZD protein and LRP5 or LRP6. Interacts directly with LRP5 or LRP6; the interaction is promoted by Wnt-binding and signaling and inhibited by DKK1. Interacts (via the PDZ-binding motif) with GPOC (via its PDZ domain). Interacts with RSPO1 and RSPO3. Interacts with glypican GPC3. Post-translationally, ubiquitinated by ZNRF3, leading to its degradation by the proteasome. In terms of tissue distribution, expressed in chondrocytes.

It is found in the membrane. It localises to the golgi apparatus. The protein localises to the cell membrane. In terms of biological role, receptor for Wnt proteins. Component of the Wnt-Fzd-LRP5-LRP6 complex that triggers beta-catenin signaling through inducing aggregation of receptor-ligand complexes into ribosome-sized signalosomes. The beta-catenin canonical signaling pathway leads to the activation of disheveled proteins, inhibition of GSK-3 kinase, nuclear accumulation of beta-catenin and activation of Wnt target genes. A second signaling pathway involving PKC and calcium fluxes has been seen for some family members, but it is not yet clear if it represents a distinct pathway or if it can be integrated in the canonical pathway, as PKC seems to be required for Wnt-mediated inactivation of GSK-3 kinase. Both pathways seem to involve interactions with G-proteins. May be involved in transduction and intercellular transmission of polarity information during tissue morphogenesis and/or in differentiated tissues. Coreceptor along with RYK of Wnt proteins, such as WNT1. The sequence is that of Frizzled-8 (Fzd8) from Mus musculus (Mouse).